Consider the following 545-residue polypeptide: CTP synthase (545 aa).

Positions methionine 1–leucine 266 are amidoligase domain. Residue serine 14 coordinates CTP. Serine 14 contributes to the UTP binding site. ATP contacts are provided by residues serine 15–isoleucine 20 and aspartate 72. Aspartate 72 and glutamate 140 together coordinate Mg(2+). Residues aspartate 147–glutamate 149, lysine 187–glutamine 192, and lysine 223 contribute to the CTP site. UTP is bound by residues lysine 187–glutamine 192 and lysine 223. Lysine 239 to valine 241 lines the ATP pocket. Residues valine 291–asparagine 543 enclose the Glutamine amidotransferase type-1 domain. Residue glycine 352 participates in L-glutamine binding. The active-site Nucleophile; for glutamine hydrolysis is the cysteine 379. L-glutamine contacts are provided by residues leucine 380–glutamine 383, glutamate 403, and arginine 471. Residues histidine 516 and glutamate 518 contribute to the active site.

Belongs to the CTP synthase family. As to quaternary structure, homotetramer.

The catalysed reaction is UTP + L-glutamine + ATP + H2O = CTP + L-glutamate + ADP + phosphate + 2 H(+). It catalyses the reaction L-glutamine + H2O = L-glutamate + NH4(+). The enzyme catalyses UTP + NH4(+) + ATP = CTP + ADP + phosphate + 2 H(+). Its pathway is pyrimidine metabolism; CTP biosynthesis via de novo pathway; CTP from UDP: step 2/2. With respect to regulation, allosterically activated by GTP, when glutamine is the substrate; GTP has no effect on the reaction when ammonia is the substrate. The allosteric effector GTP functions by stabilizing the protein conformation that binds the tetrahedral intermediate(s) formed during glutamine hydrolysis. Inhibited by the product CTP, via allosteric rather than competitive inhibition. Functionally, catalyzes the ATP-dependent amination of UTP to CTP with either L-glutamine or ammonia as the source of nitrogen. Regulates intracellular CTP levels through interactions with the four ribonucleotide triphosphates. This Buchnera aphidicola subsp. Acyrthosiphon pisum (strain 5A) protein is CTP synthase.